The sequence spans 637 residues: Transcriptional activator of proteases prtT (637 aa).

A DNA-binding region (zn(2)-C6 fungal-type) is located at residues 47–76 (CHTCRKLKTRCDVDPRGHSCRRCLSLRLDC). Positions 127–145 (PSMPCSPTFQTRNHSIDGT) are enriched in polar residues. The segment at 127–153 (PSMPCSPTFQTRNHSIDGTSSSDSMSS) is disordered.

Belongs to the prtT family.

The protein localises to the nucleus. Its function is as follows. Transcription factor required for protein utilization and degradation. Regulates transcription of major secreted proteases. The protein is Transcriptional activator of proteases prtT (prtT) of Penicillium rubens (strain ATCC 28089 / DSM 1075 / NRRL 1951 / Wisconsin 54-1255) (Penicillium chrysogenum).